The primary structure comprises 394 residues: Obg-like ATPase 1 (394 aa).

The OBG-type G domain maps to Leu-25 to Cys-282. ATP is bound by residues Asn-34–Thr-39, Phe-56–Glu-60, and Asp-94–Gly-97. Mg(2+)-binding residues include Ser-38 and Thr-58. Phe-129 is a binding site for GTP. ATP contacts are provided by residues Asn-230 to Leu-231, Leu-231, and Ser-263 to Val-265. Ser-263–Val-265 contributes to the GTP binding site. Residues Asn-303–Phe-386 enclose the TGS domain.

It belongs to the TRAFAC class OBG-HflX-like GTPase superfamily. OBG GTPase family. YchF/OLA1 subfamily. Monomer (Potential). Interacts with CAR4/GAP1. Requires Mg(2+) as cofactor.

Its subcellular location is the cytoplasm. It is found in the cytosol. Its activity is regulated as follows. Activated by GAP1. In terms of biological role, hydrolyzes ATP, and can also hydrolyze GTP with lower efficiency. Has lower affinity for GTP (Potential). Exhibits GTPase activity. Confers sensitivity to salinity stress by suppressing the anti-oxidation enzymatic activities and increasing lipid peroxidation thus leading to the accumulation of reactive oxygen species (ROS). Acts as a negative regulator of disease resistance against bacterial pathogen. The protein is Obg-like ATPase 1 of Arabidopsis thaliana (Mouse-ear cress).